A 574-amino-acid chain; its full sequence is Aspartate--tRNA ligase (574 aa).

Glu-169 is a binding site for L-aspartate. An aspartate region spans residues 193–196; that stretch reads QLFK. Arg-215 contacts L-aspartate. ATP is bound by residues 215-217 and Gln-224; that span reads RDE. His-437 serves as a coordination point for L-aspartate. Residue Glu-471 coordinates ATP. An L-aspartate-binding site is contributed by Arg-478. 523–526 is an ATP binding site; it reads GLDR.

Belongs to the class-II aminoacyl-tRNA synthetase family. Type 1 subfamily. As to quaternary structure, homodimer.

It is found in the cytoplasm. The catalysed reaction is tRNA(Asp) + L-aspartate + ATP = L-aspartyl-tRNA(Asp) + AMP + diphosphate. In terms of biological role, catalyzes the attachment of L-aspartate to tRNA(Asp) in a two-step reaction: L-aspartate is first activated by ATP to form Asp-AMP and then transferred to the acceptor end of tRNA(Asp). The protein is Aspartate--tRNA ligase of Mycoplasma mycoides subsp. mycoides SC (strain CCUG 32753 / NCTC 10114 / PG1).